The sequence spans 118 residues: Small ribosomal subunit protein uS13 (118 aa).

Residues 91–118 (HRRSLPVRGQRTKTNARTRKGPRKPIRK) are disordered.

This sequence belongs to the universal ribosomal protein uS13 family. As to quaternary structure, part of the 30S ribosomal subunit. Forms a loose heterodimer with protein S19. Forms two bridges to the 50S subunit in the 70S ribosome.

Functionally, located at the top of the head of the 30S subunit, it contacts several helices of the 16S rRNA. In the 70S ribosome it contacts the 23S rRNA (bridge B1a) and protein L5 of the 50S subunit (bridge B1b), connecting the 2 subunits; these bridges are implicated in subunit movement. Contacts the tRNAs in the A and P-sites. The polypeptide is Small ribosomal subunit protein uS13 (Marinomonas sp. (strain MWYL1)).